The primary structure comprises 2412 residues: Centrosomal protein of 295 kDa (2412 aa).

A necessary for centriole targeting and microtubule association region spans residues 1 to 540; it reads MKRKGMNTKL…KQADQPEVCC (540 aa). Position 13 is a phosphoserine (Ser13). Coiled-coil stretches lie at residues 63–84, 114–134, 209–273, 489–535, and 563–592; these read AEEL…LEKL, AERK…QKNQ, DAHL…DLAR, RRKQ…QADQ, and HQLL…VLKE. Disordered stretches follow at residues 600 to 641 and 739 to 762; these read SALV…YQPV and LDSQ…PSPF. The residue at position 634 (Ser634) is a Phosphoserine. The span at 739–757 shows a compositional bias: polar residues; the sequence is LDSQQISSEDSENISSKPS. Residues 811-841 are a coiled coil; sequence AQQGDLRFLQEQLELQKKVLQARQEAREKLL. Disordered regions lie at residues 871–891, 973–1005, 1158–1178, and 1216–1240; these read SASA…ATVS, DTQS…QDGS, LSSP…SVRS, and WVDT…QQTG. Composition is skewed to polar residues over residues 993–1005, 1158–1176, and 1224–1240; these read PSQS…QDGS, LSSP…SVSV, and FQSS…QQTG. Coiled coils occupy residues 1300–1327 and 1448–1493; these read QQDS…EAHE and QHDD…SKQI. Ser1573 carries the post-translational modification Phosphoserine. 4 disordered regions span residues 1820–1895, 1916–1937, 2028–2048, and 2089–2111; these read LAHD…LSSV, ESFS…EETD, DLSS…SESS, and TEGS…SQHA. The span at 1836–1868 shows a compositional bias: basic and acidic residues; sequence SKSHDDNAEAVKVKKSDVEDHAVLSHAVSKEEA. Residues 1885–1895 are compositionally biased toward polar residues; the sequence is QEISQEPLSSV. Positions 1921-1935 are enriched in basic and acidic residues; that stretch reads QTEHLEQESTNKQEE. The segment covering 2089-2108 has biased composition (polar residues); the sequence is TEGSEQSFQQLRPEFSSQES. Positions 2367 to 2412 are ALMS motif; it reads SLQEAFMTRQTLTERSYQRQREIWNKTRLPQTKVSKEKLPTGCTGS.

In terms of assembly, interacts (via ALMS motif) with microtubules; this interaction is direct.

The protein localises to the cytoplasm. It localises to the cytoskeleton. The protein resides in the microtubule organizing center. Its subcellular location is the centrosome. It is found in the centriole. The protein localises to the spindle. Functionally, centriole-enriched microtubule-binding protein involved in centriole biogenesis. Essential for the generation of the distal portion of new-born centrioles in a CPAP- and CEP120-mediated elongation dependent manner during the cell cycle S/G2 phase after formation of the initiating cartwheel structure. Required for the recruitment of centriolar proteins, such as POC1B, POC5 and CEP135, into the distal portion of centrioles. Also required for centriole-to-centrosome conversion during mitotic progression, but is dispensable for cartwheel removal or centriole disengagement. Binds to and stabilizes centriolar microtubule. May be involved in ciliogenesis. In Mus musculus (Mouse), this protein is Centrosomal protein of 295 kDa.